Reading from the N-terminus, the 504-residue chain is Aspartyl/glutamyl-tRNA(Asn/Gln) amidotransferase subunit B (504 aa).

Belongs to the GatB/GatE family. GatB subfamily. In terms of assembly, heterotrimer of A, B and C subunits.

It carries out the reaction L-glutamyl-tRNA(Gln) + L-glutamine + ATP + H2O = L-glutaminyl-tRNA(Gln) + L-glutamate + ADP + phosphate + H(+). The enzyme catalyses L-aspartyl-tRNA(Asn) + L-glutamine + ATP + H2O = L-asparaginyl-tRNA(Asn) + L-glutamate + ADP + phosphate + 2 H(+). Functionally, allows the formation of correctly charged Asn-tRNA(Asn) or Gln-tRNA(Gln) through the transamidation of misacylated Asp-tRNA(Asn) or Glu-tRNA(Gln) in organisms which lack either or both of asparaginyl-tRNA or glutaminyl-tRNA synthetases. The reaction takes place in the presence of glutamine and ATP through an activated phospho-Asp-tRNA(Asn) or phospho-Glu-tRNA(Gln). This is Aspartyl/glutamyl-tRNA(Asn/Gln) amidotransferase subunit B from Tropheryma whipplei (strain TW08/27) (Whipple's bacillus).